Here is a 491-residue protein sequence, read N- to C-terminus: Probable CtpA-like serine protease (491 aa).

A disordered region spans residues 1–22 (MSESKDTTEVNQEVNEKASSQS). A compositionally biased stretch (polar residues) spans 9 to 22 (EVNQEVNEKASSQS). A helical transmembrane segment spans residues 34–54 (FIIILIVTILVTAMIAVFATI). The PDZ domain occupies 119-201 (TKSFNEDVSG…TKVTLTIERG (83 aa)). Residues serine 324, aspartate 335, and lysine 349 each act as charge relay system in the active site.

This sequence belongs to the peptidase S41A family.

It is found in the cell membrane. In Staphylococcus saprophyticus subsp. saprophyticus (strain ATCC 15305 / DSM 20229 / NCIMB 8711 / NCTC 7292 / S-41), this protein is Probable CtpA-like serine protease.